The following is a 216-amino-acid chain: GTP cyclohydrolase 1 (216 aa).

Zn(2+)-binding residues include Cys108, His111, and Cys179.

The protein belongs to the GTP cyclohydrolase I family. In terms of assembly, toroid-shaped homodecamer, composed of two pentamers of five dimers.

The enzyme catalyses GTP + H2O = 7,8-dihydroneopterin 3'-triphosphate + formate + H(+). It functions in the pathway cofactor biosynthesis; 7,8-dihydroneopterin triphosphate biosynthesis; 7,8-dihydroneopterin triphosphate from GTP: step 1/1. The chain is GTP cyclohydrolase 1 from Shewanella amazonensis (strain ATCC BAA-1098 / SB2B).